Reading from the N-terminus, the 95-residue chain is Late cornified envelope protein 3B (95 aa).

Low complexity predominate over residues 1–13 (MSCQQNQQQCQPL). Disordered stretches follow at residues 1-29 (MSCQQNQQQCQPLPKCPSPKCPPKSSAQC) and 68-95 (RQSSNSCDRGSGQQDGASDCGYGSGGCC).

Belongs to the LCE family. As to expression, skin-specific. Expression was readily detected in adult trunk skin, adult arm skin, fetal skin, penal skin, vulva, esophagus and tongue. Not expressed in the cervix, rectum, lung, colon, or placenta.

Functionally, a structural component of the cornified envelope of the stratum corneum involved in innate cutaneous host defense. Possesses defensin-like antimicrobial activity against a broad spectrum of Gram-positive and Gram-negative bacteria, both aerobic and anaerobic species. Upon inflammation, may regulate skin barrier repair by shaping cutaneous microbiota composition and immune response to bacterial antigens. The polypeptide is Late cornified envelope protein 3B (Homo sapiens (Human)).